The sequence spans 205 residues: Octanoyltransferase (205 aa).

The 176-residue stretch at 30 to 205 folds into the BPL/LPL catalytic domain; the sequence is NSADELVWLL…ILKKEFYKIF (176 aa). Residues 68–75, 140–142, and 153–155 contribute to the substrate site; these read RGGKHTYH, AFG, and GIA. The active-site Acyl-thioester intermediate is Cys171.

The protein belongs to the LipB family.

It localises to the cytoplasm. It carries out the reaction octanoyl-[ACP] + L-lysyl-[protein] = N(6)-octanoyl-L-lysyl-[protein] + holo-[ACP] + H(+). Its pathway is protein modification; protein lipoylation via endogenous pathway; protein N(6)-(lipoyl)lysine from octanoyl-[acyl-carrier-protein]: step 1/2. Functionally, catalyzes the transfer of endogenously produced octanoic acid from octanoyl-acyl-carrier-protein onto the lipoyl domains of lipoate-dependent enzymes. Lipoyl-ACP can also act as a substrate although octanoyl-ACP is likely to be the physiological substrate. This chain is Octanoyltransferase, found in Wolbachia pipientis wMel.